Reading from the N-terminus, the 328-residue chain is Tyrosine--tRNA ligase (328 aa).

Tyr-33 is a binding site for L-tyrosine. Residues 38 to 46 (PSGVLHIGH) carry the 'HIGH' region motif. Residues Tyr-154, Gln-158, Asp-161, and Gln-176 each coordinate L-tyrosine. The interval 193–227 (EPPTSLHTPLIADLGTGRGKMSSSEGVTISMEDSR) is disordered. The 'KMSKS' region motif lies at 212 to 216 (KMSSS). An ATP-binding site is contributed by Ser-215.

It belongs to the class-I aminoacyl-tRNA synthetase family. TyrS type 3 subfamily. In terms of assembly, homodimer.

The protein resides in the cytoplasm. It catalyses the reaction tRNA(Tyr) + L-tyrosine + ATP = L-tyrosyl-tRNA(Tyr) + AMP + diphosphate + H(+). Its function is as follows. Catalyzes the attachment of tyrosine to tRNA(Tyr) in a two-step reaction: tyrosine is first activated by ATP to form Tyr-AMP and then transferred to the acceptor end of tRNA(Tyr). The polypeptide is Tyrosine--tRNA ligase (Halorubrum lacusprofundi (strain ATCC 49239 / DSM 5036 / JCM 8891 / ACAM 34)).